A 107-amino-acid polypeptide reads, in one-letter code: Iron-binding protein IscA (107 aa).

3 residues coordinate Fe cation: cysteine 35, cysteine 99, and cysteine 101.

Belongs to the HesB/IscA family. As to quaternary structure, homodimer; may form tetramers and higher multimers. The cofactor is Fe cation.

Functionally, is able to transfer iron-sulfur clusters to apo-ferredoxin. Multiple cycles of [2Fe2S] cluster formation and transfer are observed, suggesting that IscA acts catalytically. Recruits intracellular free iron so as to provide iron for the assembly of transient iron-sulfur cluster in IscU in the presence of IscS, L-cysteine and the thioredoxin reductase system TrxA/TrxB. The sequence is that of Iron-binding protein IscA from Klebsiella pneumoniae (strain 342).